The chain runs to 535 residues: Atrial natriuretic peptide receptor 3 (535 aa).

Positions M1 to S26 are cleaved as a signal peptide. The propeptide occupies G27–R40. Residues E41 to A477 are Extracellular-facing. N81 carries an N-linked (GlcNAc...) asparagine glycan. 2 disulfides stabilise this stretch: C103–C131 and C208–C256. N-linked (GlcNAc...) asparagine glycans are attached at residues N288 and N389. The chain crosses the membrane as a helical span at residues V478–F498. Residues R499–A535 lie on the Cytoplasmic side of the membrane.

It belongs to the ANF receptor family. As to quaternary structure, homodimer; disulfide-linked. Interacts with OSTN.

It localises to the cell membrane. Receptor for the natriuretic peptide hormones, binding with similar affinities atrial natriuretic peptide NPPA/ANP, brain natriuretic peptide NPPB/BNP, and C-type natriuretic peptide NPPC/CNP. May function as a clearance receptor for NPPA, NPPB and NPPC, regulating their local concentrations and effects. Acts as a regulator of osteoblast differentiation and bone growth by binding to its ligand osteocrin, thereby preventing binding between NPR3/NPR-C and natriuretic peptides, leading to increase cGMP production. The protein is Atrial natriuretic peptide receptor 3 (Npr3) of Rattus norvegicus (Rat).